A 516-amino-acid polypeptide reads, in one-letter code: Glucose-6-phosphate 1-dehydrogenase 5, cytoplasmic (516 aa).

NADP(+) is bound by residues 38–45, Arg73, Tyr156, and Lys183; that span reads GASGDLAK. D-glucose 6-phosphate-binding positions include Lys183, 213–217, Glu251, and Asp270; that span reads HYLGK. His275 acts as the Proton acceptor in catalysis. Lys358 is an NADP(+) binding site. Residues Lys361 and Lys366 each coordinate D-glucose 6-phosphate. The NADP(+) site is built by Lys367, Arg371, and Arg395. A D-glucose 6-phosphate-binding site is contributed by Gln397. NADP(+)-binding positions include 403-405, 423-425, Arg489, and Trp511; these read YMK and DLS.

The protein belongs to the glucose-6-phosphate dehydrogenase family. Forms homodimer. As to expression, expressed in leaves and stems.

It localises to the cytoplasm. It is found in the cytosol. It catalyses the reaction D-glucose 6-phosphate + NADP(+) = 6-phospho-D-glucono-1,5-lactone + NADPH + H(+). It functions in the pathway carbohydrate degradation; pentose phosphate pathway; D-ribulose 5-phosphate from D-glucose 6-phosphate (oxidative stage): step 1/3. Regulated by metabolites. Functionally, catalyzes the rate-limiting step of the oxidative pentose-phosphate pathway, which represents a route for the dissimilation of carbohydrates besides glycolysis. The main function of this enzyme is to provide reducing power (NADPH) and pentose phosphates for fatty acid and nucleic acid synthesis which are involved in membrane synthesis and cell division. In Arabidopsis thaliana (Mouse-ear cress), this protein is Glucose-6-phosphate 1-dehydrogenase 5, cytoplasmic.